The following is a 178-amino-acid chain: Large ribosomal subunit protein uL5 (178 aa).

It belongs to the universal ribosomal protein uL5 family. As to quaternary structure, part of the 50S ribosomal subunit; part of the 5S rRNA/L5/L18/L25 subcomplex. Contacts the 5S rRNA and the P site tRNA. Forms a bridge to the 30S subunit in the 70S ribosome.

This is one of the proteins that bind and probably mediate the attachment of the 5S RNA into the large ribosomal subunit, where it forms part of the central protuberance. In the 70S ribosome it contacts protein S13 of the 30S subunit (bridge B1b), connecting the 2 subunits; this bridge is implicated in subunit movement. Contacts the P site tRNA; the 5S rRNA and some of its associated proteins might help stabilize positioning of ribosome-bound tRNAs. The polypeptide is Large ribosomal subunit protein uL5 (Psychrobacter sp. (strain PRwf-1)).